The following is a 228-amino-acid chain: Protein Iojap, chloroplastic (228 aa).

A disordered region spans residues methionine 1–proline 54. The N-terminal 62 residues, methionine 1 to arginine 62, are a transit peptide targeting the chloroplast.

This sequence belongs to the Iojap/RsfS family. In terms of assembly, interacts with chloroplast ribosomal protein uL14c (rpl14).

Its subcellular location is the plastid. The protein localises to the chloroplast. May be a ribosome silencing factor (Potential). Involved in plastid biogenesis. Plastids affected by a mutation in Iojap lose the ability to perform translation and lack plastid ribosomes. In Zea mays (Maize), this protein is Protein Iojap, chloroplastic (Ij).